The chain runs to 434 residues: FAD-dependent monooxygenase cfoG (434 aa).

The N-terminal stretch at 1-22 is a signal peptide; the sequence is MKSSPGLHIIIVGAGITGLATA. Glu36 is a binding site for FAD. Catalysis depends on residues Arg193 and Tyr233. 2 residues coordinate FAD: Asp314 and Gly327.

It belongs to the paxM FAD-dependent monooxygenase family. In terms of assembly, monomer. FAD serves as cofactor.

The protein operates within secondary metabolite biosynthesis; flavonoid biosynthesis. Monooxygenase; part of the gene cluster that mediates the biosynthesis of chlorflavonin, a fungal flavonoid with acetolactate synthase inhibitory activity. Within the pathway, cfoG is responsible for the hydroxylation of the flavonoid skeleton at position C8. The pathway begins with the PKS-NRPS hybrid synthetase cfoA that uses benzoic acid or p-hydroxybenzoic acid as a starter unit with four rounds of chain elongation using malonyl-CoA to form the chalcone skeleton. Then, a new type of chalcone isomerase, cfoK, catalyzes the conversion of the chalcone into a flavanone by a histidine-mediated oxa-Michael addition mechanism. The desaturation of flavanone to flavone is catalyzed by a new type of flavone synthase, the flavin mononucleotide (FMN)-dependent oxidoreductase cfoJ. Monooxygenases cfoF, cfoG, and P450 cfoH are responsible for the hydroxylation of the flavonoid skeleton at sites C3, C8, and C2', respectively. Like cfoF, the dehydratase cfoI plays also a role in the hydroxylation of position C3. Methyltransferases cfoB, cfoC, and cfoD then catalyze the methylation of C7-OH, C8-OH, and C3-OH, respectively. Finally, the monooxygenase cfoE is responsible for the chlorination of flavonoid at position C3'. The chain is FAD-dependent monooxygenase cfoG from Aspergillus candidus.